The chain runs to 1021 residues: Peroxisomal ATPase PEX6 (1021 aa).

763-770 (GPPGTGKT) lines the ATP pocket.

It belongs to the AAA ATPase family. As to quaternary structure, interacts with PEX1; forming the PEX1-PEX6 AAA ATPase complex, which is composed of a heterohexamer formed by a trimer of PEX1-PEX6 dimers.

It localises to the cytoplasm. It is found in the cytosol. Its subcellular location is the peroxisome membrane. The enzyme catalyses ATP + H2O = ADP + phosphate + H(+). Its function is as follows. Component of the PEX1-PEX6 AAA ATPase complex, a protein dislocase complex that mediates the ATP-dependent extraction of the PEX5 receptor from peroxisomal membranes, an essential step for PEX5 recycling. Specifically recognizes PEX5 monoubiquitinated at 'Cys-6', and pulls it out of the peroxisome lumen through the PEX2-PEX10-PEX12 retrotranslocation channel. Extraction by the PEX1-PEX6 AAA ATPase complex is accompanied by unfolding of the TPR repeats and release of bound cargo from PEX5. This Eremothecium gossypii (strain ATCC 10895 / CBS 109.51 / FGSC 9923 / NRRL Y-1056) (Yeast) protein is Peroxisomal ATPase PEX6 (PEX6).